The primary structure comprises 351 residues: UDP-3-O-acylglucosamine N-acyltransferase (351 aa).

H257 (proton acceptor) is an active-site residue.

Belongs to the transferase hexapeptide repeat family. LpxD subfamily. As to quaternary structure, homotrimer.

The enzyme catalyses a UDP-3-O-[(3R)-3-hydroxyacyl]-alpha-D-glucosamine + a (3R)-hydroxyacyl-[ACP] = a UDP-2-N,3-O-bis[(3R)-3-hydroxyacyl]-alpha-D-glucosamine + holo-[ACP] + H(+). The protein operates within bacterial outer membrane biogenesis; LPS lipid A biosynthesis. In terms of biological role, catalyzes the N-acylation of UDP-3-O-acylglucosamine using 3-hydroxyacyl-ACP as the acyl donor. Is involved in the biosynthesis of lipid A, a phosphorylated glycolipid that anchors the lipopolysaccharide to the outer membrane of the cell. The protein is UDP-3-O-acylglucosamine N-acyltransferase of Methylorubrum populi (strain ATCC BAA-705 / NCIMB 13946 / BJ001) (Methylobacterium populi).